Consider the following 275-residue polypeptide: Large ribosomal subunit protein uL2 (275 aa).

The disordered stretch occupies residues 222-257; sequence GTAMNAVDHPHGGGRGRSKGNNQPRSPWNQPAKGFK. Residues 240-250 show a composition bias toward polar residues; that stretch reads KGNNQPRSPWN.

Belongs to the universal ribosomal protein uL2 family. As to quaternary structure, part of the 50S ribosomal subunit. Forms a bridge to the 30S subunit in the 70S ribosome.

In terms of biological role, one of the primary rRNA binding proteins. Required for association of the 30S and 50S subunits to form the 70S ribosome, for tRNA binding and peptide bond formation. It has been suggested to have peptidyltransferase activity; this is somewhat controversial. Makes several contacts with the 16S rRNA in the 70S ribosome. This Endomicrobium trichonymphae protein is Large ribosomal subunit protein uL2.